Reading from the N-terminus, the 319-residue chain is Taste receptor type 2 member 39 (319 aa).

At methionine 1–serine 16 the chain is on the extracellular side. The chain crosses the membrane as a helical span at residues isoleucine 17–valine 37. Over methionine 38–arginine 65 the chain is Cytoplasmic. Residues isoleucine 66–tyrosine 86 form a helical membrane-spanning segment. Over asparagine 87–serine 97 the chain is Extracellular. Asparagine 95 is a glycosylation site (N-linked (GlcNAc...) asparagine). A helical membrane pass occupies residues phenylalanine 98–valine 118. The Cytoplasmic portion of the chain corresponds to lysine 119 to glutamate 137. Residues leucine 138 to serine 158 traverse the membrane as a helical segment. The Extracellular segment spans residues lysine 159–leucine 194. N-linked (GlcNAc...) asparagine glycans are attached at residues asparagine 167, asparagine 176, and asparagine 190. A helical membrane pass occupies residues phenylalanine 195–phenylalanine 215. The Cytoplasmic segment spans residues serine 216 to serine 247. A helical membrane pass occupies residues cysteine 248–valine 268. The Extracellular segment spans residues aspartate 269 to phenylalanine 273. The helical transmembrane segment at tryptophan 274–isoleucine 294 threads the bilayer. Residues glutamine 295 to phenylalanine 319 are Cytoplasmic-facing.

Belongs to the G-protein coupled receptor T2R family.

Its subcellular location is the membrane. Its function is as follows. Putative taste receptor which may play a role in the perception of bitterness. In Mus musculus (Mouse), this protein is Taste receptor type 2 member 39 (Tas2r39).